A 148-amino-acid polypeptide reads, in one-letter code: UPF0251 protein Cbei_2962 (148 aa).

The protein belongs to the UPF0251 family.

The sequence is that of UPF0251 protein Cbei_2962 from Clostridium beijerinckii (strain ATCC 51743 / NCIMB 8052) (Clostridium acetobutylicum).